The chain runs to 368 residues: Transcription factor TGA1 (368 aa).

Polar residues predominate over residues 53-65 (LDNNVSEDTSHGT). The disordered stretch occupies residues 53–83 (LDNNVSEDTSHGTAGTPHMFDQEASTSRHPD). One can recognise a bZIP domain in the interval 82 to 145 (PDKIQRRLAQ…NGIDTNSLGF (64 aa)). Coiled coils occupy residues 83-131 (DKIQ…RQQG) and 261-281 (NLKQ…EKLQ). Residues 84–104 (KIQRRLAQNREAARKSRLRKK) form a basic motif region. The tract at residues 110–124 (LETSRLKLIQLEQEL) is leucine-zipper. A DOG1 domain is found at 153–363 (IAAFEMEYGH…RALSSSWATR (211 aa)). Residues C260 and C266 are joined by a disulfide bond.

This sequence belongs to the bZIP family. As to quaternary structure, binds DNA as a dimer. The reduced form interacts with NPR1. Predominantly expressed in roots.

Its subcellular location is the nucleus. Its function is as follows. Transcriptional activator that binds specifically to the DNA sequence 5'-TGACG-3'. Recognizes ocs elements like the as-1 motif of the cauliflower mosaic virus 35S promoter. Binding to the as-1-like cis elements mediate auxin- and salicylic acid-inducible transcription. May be involved in the induction of the systemic acquired resistance (SAR) via its interaction with NPR1. Could also bind to the Hex-motif (5'-TGACGTGG-3') another cis-acting element found in plant histone promoters. This Arabidopsis thaliana (Mouse-ear cress) protein is Transcription factor TGA1 (TGA1).